Here is a 360-residue protein sequence, read N- to C-terminus: Phenylalanine--tRNA ligase alpha subunit (360 aa).

E260 serves as a coordination point for Mg(2+).

This sequence belongs to the class-II aminoacyl-tRNA synthetase family. Phe-tRNA synthetase alpha subunit type 1 subfamily. Tetramer of two alpha and two beta subunits. Mg(2+) serves as cofactor.

Its subcellular location is the cytoplasm. It carries out the reaction tRNA(Phe) + L-phenylalanine + ATP = L-phenylalanyl-tRNA(Phe) + AMP + diphosphate + H(+). This Paracoccus denitrificans (strain Pd 1222) protein is Phenylalanine--tRNA ligase alpha subunit.